The sequence spans 72 residues: DNA-directed RNA polymerase subunit omega (72 aa).

It belongs to the RNA polymerase subunit omega family. The RNAP catalytic core consists of 2 alpha, 1 beta, 1 beta' and 1 omega subunit. When a sigma factor is associated with the core the holoenzyme is formed, which can initiate transcription.

The catalysed reaction is RNA(n) + a ribonucleoside 5'-triphosphate = RNA(n+1) + diphosphate. Its function is as follows. Promotes RNA polymerase assembly. Latches the N- and C-terminal regions of the beta' subunit thereby facilitating its interaction with the beta and alpha subunits. This Clostridium botulinum (strain Langeland / NCTC 10281 / Type F) protein is DNA-directed RNA polymerase subunit omega.